A 155-amino-acid polypeptide reads, in one-letter code: Small ribosomal subunit protein uS7 (155 aa).

Belongs to the universal ribosomal protein uS7 family. As to quaternary structure, part of the 30S ribosomal subunit. Contacts proteins S9 and S11.

Functionally, one of the primary rRNA binding proteins, it binds directly to 16S rRNA where it nucleates assembly of the head domain of the 30S subunit. Is located at the subunit interface close to the decoding center, probably blocks exit of the E-site tRNA. This chain is Small ribosomal subunit protein uS7, found in Amoebophilus asiaticus (strain 5a2).